The following is a 309-amino-acid chain: ADP,ATP carrier protein 1 (309 aa).

3 Solcar repeats span residues 11–104 (SHFG…IKSL), 116–208 (KWFA…FKPV), and 216–302 (GSFV…LQLI). Transmembrane regions (helical) follow at residues 13–40 (FGVD…VKLL), 81–105 (TANV…KSLL), 114–134 (YAKW…LSLL), 184–205 (FVPS…YDSF), and 219–239 (VASF…SYPL). Arg86 and Lys98 together coordinate ADP. Arg243 contributes to the ADP binding site. The segment at 243-248 (RRRMMM) is important for transport activity. Residues 243–248 (RRRMMM) carry the Nucleotide carrier signature motif motif. The helical transmembrane segment at 279–299 (CGANIFRGVAAAGVISLYDQL) threads the bilayer.

Belongs to the mitochondrial carrier (TC 2.A.29) family. Monomer.

It is found in the mitochondrion inner membrane. The catalysed reaction is ADP(in) + ATP(out) = ADP(out) + ATP(in). The matrix-open state (m-state) is inhibited by the membrane-permeable bongkrekic acid (BKA). The cytoplasmic-open state (c-state) is inhibited by the membrane-impermeable toxic inhibitor carboxyatractyloside (CATR). Functionally, ADP:ATP antiporter that mediates import of ADP into the mitochondrial matrix for ATP synthesis, and export of ATP out to fuel the cell. Cycles between the cytoplasmic-open state (c-state) and the matrix-open state (m-state): operates by the alternating access mechanism with a single substrate-binding site intermittently exposed to either the cytosolic (c-state) or matrix (m-state) side of the inner mitochondrial membrane. This chain is ADP,ATP carrier protein 1 (AAC1), found in Saccharomyces cerevisiae (strain ATCC 204508 / S288c) (Baker's yeast).